We begin with the raw amino-acid sequence, 218 residues long: Ribose-5-phosphate isomerase A (218 aa).

Residues threonine 28–threonine 31, aspartate 81–aspartate 84, and lysine 94–glycine 97 contribute to the substrate site. Glutamate 103 acts as the Proton acceptor in catalysis. Position 121 (lysine 121) interacts with substrate.

This sequence belongs to the ribose 5-phosphate isomerase family. In terms of assembly, homodimer.

The enzyme catalyses aldehydo-D-ribose 5-phosphate = D-ribulose 5-phosphate. The protein operates within carbohydrate degradation; pentose phosphate pathway; D-ribose 5-phosphate from D-ribulose 5-phosphate (non-oxidative stage): step 1/1. In terms of biological role, catalyzes the reversible conversion of ribose-5-phosphate to ribulose 5-phosphate. The sequence is that of Ribose-5-phosphate isomerase A from Methylococcus capsulatus (strain ATCC 33009 / NCIMB 11132 / Bath).